Here is a 251-residue protein sequence, read N- to C-terminus: MTVSIDGVSKYFSKQTRTVQVLENINFQLEKGDFVTVIGPSGCGKSTLLKIIAGLDGEFEGEIIIDGERITKPSKKQGFIFQEHRLFPWLTVEENIAADLSLKDKYVKDKVKEWVEIVRLDGFEKSYPKEISGGMSQRVAIARALLRDPNVLLLDEPFGALDAFTRSHLQEVLLNIWEQKKTTMIFVTHDIDEAIYLSNRIVIMSAKPGKIHKVIENNLPYPRSKTSESFQEIRKKVLQQFERGGLIQTSI.

The region spanning 3–231 (VSIDGVSKYF…PRSKTSESFQ (229 aa)) is the ABC transporter domain. 39–46 (GPSGCGKS) serves as a coordination point for ATP.

This sequence belongs to the ABC transporter superfamily. Aliphatic sulfonates importer (TC 3.A.1.17.2) family. As to quaternary structure, the complex is composed of two ATP-binding proteins (SsuB), two transmembrane proteins (SsuC) and a solute-binding protein (SsuA).

The protein localises to the cell membrane. The enzyme catalyses ATP + H2O + aliphatic sulfonate-[sulfonate-binding protein]Side 1 = ADP + phosphate + aliphatic sulfonateSide 2 + [sulfonate-binding protein]Side 1.. Its function is as follows. Part of the ABC transporter complex SsuABC involved in aliphatic sulfonates import. Responsible for energy coupling to the transport system. This is Aliphatic sulfonates import ATP-binding protein SsuB from Bacillus cereus (strain ATCC 10987 / NRS 248).